The following is a 284-amino-acid chain: MKQKVVSIGDIKVANDLPFVLFGGMNVLESRDLAMRICEHYVTVTQKLGIPYVFKASFDKANRSSIHSYRGPGLEEGMKIFQEIKQAFGVKIITDVHEASQAQTVADVVDVIQLPAFLARQTDLVEAMAKTGAVINVKKPQFVSPGQMGNIVDKFAEGGNENVILCDRGANFGYDNLVVDMLGFNVMKQVSNNSPVIFDVTHALQCRDPMGAASSGRRGQVSELARAGMAVGIAGLFIEAHPDPANAKCDGPSALPLDKLEPFLLQMKAIDDLVKSFPELDTNS.

It belongs to the KdsA family.

The protein resides in the cytoplasm. It carries out the reaction D-arabinose 5-phosphate + phosphoenolpyruvate + H2O = 3-deoxy-alpha-D-manno-2-octulosonate-8-phosphate + phosphate. It participates in carbohydrate biosynthesis; 3-deoxy-D-manno-octulosonate biosynthesis; 3-deoxy-D-manno-octulosonate from D-ribulose 5-phosphate: step 2/3. It functions in the pathway bacterial outer membrane biogenesis; lipopolysaccharide biosynthesis. The protein is 2-dehydro-3-deoxyphosphooctonate aldolase of Erwinia tasmaniensis (strain DSM 17950 / CFBP 7177 / CIP 109463 / NCPPB 4357 / Et1/99).